We begin with the raw amino-acid sequence, 376 residues long: DNA replication and repair protein RecF (376 aa).

30-37 (GHNGVGKT) contributes to the ATP binding site.

It belongs to the RecF family.

Its subcellular location is the cytoplasm. The RecF protein is involved in DNA metabolism; it is required for DNA replication and normal SOS inducibility. RecF binds preferentially to single-stranded, linear DNA. It also seems to bind ATP. In Salinispora arenicola (strain CNS-205), this protein is DNA replication and repair protein RecF.